Here is an 852-residue protein sequence, read N- to C-terminus: Genome polyprotein (852 aa).

2 short sequence motifs ((L)YPX(n)L motif) span residues 167–171 (YPHGL) and 200–205 (YPVWEL). The involved in P1-2A pentamerization stretch occupies residues 766–836 (MMSRIAAGDL…PRKMKGLFSQ (71 aa)).

The protein belongs to the picornaviridae polyprotein family. As to quaternary structure, homodimer. Homomultimer; probably interacts with membranes in a multimeric form. Seems to assemble into amyloid-like fibers. Homopentamer. Homooligomer. In terms of assembly, interacts with capsid protein VP2. Interacts with capsid protein VP3. As to quaternary structure, interacts with capsid protein VP1. Interacts with capsid protein VP3. Interacts with capsid protein VP1. Interacts with capsid protein VP2. Specific enzymatic cleavages by viral protease in vivo yield a variety of precursors and mature proteins. Polyprotein processing intermediates are produced, such as P1-2A which is a functional precursor of the structural proteins, VP0 which is a VP4-VP2 precursor, VP1-2A precursor, 3ABC precursor which is a stable and catalytically active precursor of 3A, 3B and 3C proteins, 3AB and 3CD precursors. The assembly signal 2A is removed from VP1-2A by a host protease, possibly host Cathepsin L. This cleavage occurs over a region of 3 amino-acids probably generating VP1 proteins with heterogeneous C-termini. In terms of processing, during virion maturation, immature virions are rendered infectious following cleavage of VP0 into VP4 and VP2. This maturation seems to be an autocatalytic event triggered by the presence of RNA in the capsid and is followed by a conformational change of the particle. Post-translationally, the assembly signal 2A is removed from VP1-2A by a host protease, possibly host Cathepsin L in naked virions. This cleavage does not occur in enveloped virions. This cleavage occurs over a region of 3 amino-acids probably generating VP1 proteins with heterogeneous C-termini. Viral protein genome-linked: VPg is uridylylated prior to priming replication into VPg-pUpU. In terms of processing, unlike other picornaviruses, does not seem to be myristoylated.

The protein localises to the virion. It is found in the host endosome. It localises to the host multivesicular body. Its subcellular location is the host membrane. In terms of biological role, capsid proteins VP1, VP2, and VP3 form a closed capsid enclosing the viral positive strand RNA genome. All these proteins contain a beta-sheet structure called beta-barrel jelly roll. Together they form an icosahedral capsid (T=3) composed of 60 copies of each VP1, VP2, and VP3, with a diameter of approximately 300 Angstroms. VP1 is situated at the 12 fivefold axes, whereas VP2 and VP3 are located at the quasi-sixfold axes. The naked capsid interacts with the host receptor HAVCR1 to provide virion attachment to and probably entry into the target cell. VP0 precursor is a component of the immature procapsids. Its function is as follows. Plays a role in the assembly of the 12 pentamers into an icosahedral structure. Has not been detected in mature virions, supposedly owing to its small size. Functionally, precursor component of immature procapsids that corresponds to an extended form of the structural protein VP1. After maturation, possibly by the host Cathepsin L, the assembly signal 2A is cleaved to give rise to the mature VP1 protein. In terms of biological role, affects membrane integrity and causes an increase in membrane permeability. Functions as a viroporin. Affects membrane integrity and causes an increase in membrane permeability. Involved in host intracellular membrane rearrangements probably to give rise to the viral factories. Does not disrupt calcium homeostasis or glycoprotein trafficking. Antagonizes the innate immune response of the host by suppressing IFN-beta synthesis, which it achieves by interfering with the RIG-I/IFIH1 pathway. In Cercopithecus hamlyni (Owl-faced monkey), this protein is Genome polyprotein.